Reading from the N-terminus, the 284-residue chain is Bifunctional protein FolD (284 aa).

Residues 164 to 166, T189, and I230 contribute to the NADP(+) site; that span reads GRG.

Belongs to the tetrahydrofolate dehydrogenase/cyclohydrolase family. In terms of assembly, homodimer.

The enzyme catalyses (6R)-5,10-methylene-5,6,7,8-tetrahydrofolate + NADP(+) = (6R)-5,10-methenyltetrahydrofolate + NADPH. It carries out the reaction (6R)-5,10-methenyltetrahydrofolate + H2O = (6R)-10-formyltetrahydrofolate + H(+). It functions in the pathway one-carbon metabolism; tetrahydrofolate interconversion. In terms of biological role, catalyzes the oxidation of 5,10-methylenetetrahydrofolate to 5,10-methenyltetrahydrofolate and then the hydrolysis of 5,10-methenyltetrahydrofolate to 10-formyltetrahydrofolate. This Pelotomaculum thermopropionicum (strain DSM 13744 / JCM 10971 / SI) protein is Bifunctional protein FolD.